Here is a 497-residue protein sequence, read N- to C-terminus: Glycerol kinase (497 aa).

Threonine 12 is a binding site for ADP. ATP contacts are provided by threonine 12, threonine 13, and serine 14. A sn-glycerol 3-phosphate-binding site is contributed by threonine 12. Arginine 16 contributes to the ADP binding site. 4 residues coordinate sn-glycerol 3-phosphate: arginine 82, glutamate 83, tyrosine 134, and aspartate 243. The glycerol site is built by arginine 82, glutamate 83, tyrosine 134, aspartate 243, and glutamine 244. The ADP site is built by threonine 265 and glycine 308. ATP-binding residues include threonine 265, glycine 308, glutamine 312, and glycine 409. Positions 409 and 413 each coordinate ADP.

This sequence belongs to the FGGY kinase family.

It carries out the reaction glycerol + ATP = sn-glycerol 3-phosphate + ADP + H(+). It functions in the pathway polyol metabolism; glycerol degradation via glycerol kinase pathway; sn-glycerol 3-phosphate from glycerol: step 1/1. With respect to regulation, inhibited by fructose 1,6-bisphosphate (FBP). Its function is as follows. Key enzyme in the regulation of glycerol uptake and metabolism. Catalyzes the phosphorylation of glycerol to yield sn-glycerol 3-phosphate. The protein is Glycerol kinase of Solidesulfovibrio magneticus (strain ATCC 700980 / DSM 13731 / RS-1) (Desulfovibrio magneticus).